A 304-amino-acid polypeptide reads, in one-letter code: CBY1-interacting BAR domain-containing protein 2 (304 aa).

A BAR-like region spans residues 6 to 217 (SRDSQVRVME…EKYDLERDLL (212 aa)).

This sequence belongs to the CIBAR family. As to quaternary structure, homodimer (via BAR-like domain). Heterodimer (via BAR-like domain) with FAM92A. Interacts with CBY1. As to expression, restricted to certain tissues, most prominently expressed in multicilaited tissues.

It is found in the cytoplasm. It localises to the cytoskeleton. Its subcellular location is the microtubule organizing center. The protein localises to the centrosome. The protein resides in the centriole. It is found in the cilium basal body. May play a role in ciliogenesis. In cooperation with CBY1 may facilitate ciliogenesis likely by the recruitment and fusion of endosomal vesicles at distal appendages during early stages of ciliogenesis. This is CBY1-interacting BAR domain-containing protein 2 from Homo sapiens (Human).